A 192-amino-acid chain; its full sequence is uncharacterized protein (192 aa).

The Nudix hydrolase domain occupies 29-160 (HRQAAVLIPI…PLDIYRRGDS (132 aa)). Positions 67–89 (GAVDDTDTSVIAAALREAEEEVA) match the Nudix box motif. E83 and E87 together coordinate Mg(2+).

The protein belongs to the Nudix hydrolase family. PCD1 subfamily. It depends on Mn(2+) as a cofactor. Mg(2+) is required as a cofactor.

Functionally, probably mediates the hydrolysis of some nucleoside diphosphate derivatives. This is an uncharacterized protein from Escherichia fergusonii (strain ATCC 35469 / DSM 13698 / CCUG 18766 / IAM 14443 / JCM 21226 / LMG 7866 / NBRC 102419 / NCTC 12128 / CDC 0568-73).